Here is a 552-residue protein sequence, read N- to C-terminus: Dihydroxy-acid dehydratase (552 aa).

Asp78 lines the Mg(2+) pocket. Position 119 (Cys119) interacts with [2Fe-2S] cluster. Asp120 and Lys121 together coordinate Mg(2+). Position 121 is an N6-carboxylysine (Lys121). Cys191 is a binding site for [2Fe-2S] cluster. Glu442 contacts Mg(2+). Ser468 functions as the Proton acceptor in the catalytic mechanism.

This sequence belongs to the IlvD/Edd family. Homodimer. The cofactor is [2Fe-2S] cluster. Mg(2+) serves as cofactor.

The catalysed reaction is (2R)-2,3-dihydroxy-3-methylbutanoate = 3-methyl-2-oxobutanoate + H2O. It catalyses the reaction (2R,3R)-2,3-dihydroxy-3-methylpentanoate = (S)-3-methyl-2-oxopentanoate + H2O. Its pathway is amino-acid biosynthesis; L-isoleucine biosynthesis; L-isoleucine from 2-oxobutanoate: step 3/4. It functions in the pathway amino-acid biosynthesis; L-valine biosynthesis; L-valine from pyruvate: step 3/4. Its function is as follows. Functions in the biosynthesis of branched-chain amino acids. Catalyzes the dehydration of (2R,3R)-2,3-dihydroxy-3-methylpentanoate (2,3-dihydroxy-3-methylvalerate) into 2-oxo-3-methylpentanoate (2-oxo-3-methylvalerate) and of (2R)-2,3-dihydroxy-3-methylbutanoate (2,3-dihydroxyisovalerate) into 2-oxo-3-methylbutanoate (2-oxoisovalerate), the penultimate precursor to L-isoleucine and L-valine, respectively. The polypeptide is Dihydroxy-acid dehydratase (Moorella thermoacetica (strain ATCC 39073 / JCM 9320)).